Reading from the N-terminus, the 293-residue chain is Protease HtpX (293 aa).

A run of 2 helical transmembrane segments spans residues 4-24 and 34-54; these read IALFLITNLAVMLVFGLVLSL and GLMIMAGLFGFGGAFVSLLMS. Histidine 139 is a Zn(2+) binding site. Residue glutamate 140 is part of the active site. Histidine 143 is a Zn(2+) binding site. Helical transmembrane passes span 158-178 and 193-213; these read IVNTFVIFISRLIAQVVSGFL and MVYFAVATVLELVFGILASII. Glutamate 222 is a Zn(2+) binding site.

The protein belongs to the peptidase M48B family. Zn(2+) is required as a cofactor.

It localises to the cell inner membrane. This Pectobacterium atrosepticum (strain SCRI 1043 / ATCC BAA-672) (Erwinia carotovora subsp. atroseptica) protein is Protease HtpX.